The sequence spans 137 residues: Large ribosomal subunit protein uL16 (137 aa).

This sequence belongs to the universal ribosomal protein uL16 family. As to quaternary structure, part of the 50S ribosomal subunit.

In terms of biological role, binds 23S rRNA and is also seen to make contacts with the A and possibly P site tRNAs. The chain is Large ribosomal subunit protein uL16 from Maricaulis maris (strain MCS10) (Caulobacter maris).